The following is a 274-amino-acid chain: NADPH-dependent 7-cyano-7-deazaguanine reductase (274 aa).

80–82 (VES) is a substrate binding site. 82–83 (SK) is a binding site for NADPH. The active-site Thioimide intermediate is Cys-181. Asp-188 acts as the Proton donor in catalysis. 220–221 (HE) provides a ligand contact to substrate. 249-250 (RG) is a binding site for NADPH.

Belongs to the GTP cyclohydrolase I family. QueF type 2 subfamily. As to quaternary structure, homodimer.

Its subcellular location is the cytoplasm. The enzyme catalyses 7-aminomethyl-7-carbaguanine + 2 NADP(+) = 7-cyano-7-deazaguanine + 2 NADPH + 3 H(+). The protein operates within tRNA modification; tRNA-queuosine biosynthesis. Catalyzes the NADPH-dependent reduction of 7-cyano-7-deazaguanine (preQ0) to 7-aminomethyl-7-deazaguanine (preQ1). The sequence is that of NADPH-dependent 7-cyano-7-deazaguanine reductase from Paraburkholderia xenovorans (strain LB400).